The following is a 129-amino-acid chain: Glycine cleavage system H protein (129 aa).

Residues 24-106 (SYTVGITEHA…YGEGWFFRVM (83 aa)) enclose the Lipoyl-binding domain. K65 bears the N6-lipoyllysine mark.

This sequence belongs to the GcvH family. The glycine cleavage system is composed of four proteins: P, T, L and H. The cofactor is (R)-lipoate.

The glycine cleavage system catalyzes the degradation of glycine. The H protein shuttles the methylamine group of glycine from the P protein to the T protein. This Shewanella sp. (strain MR-7) protein is Glycine cleavage system H protein.